Consider the following 311-residue polypeptide: Malate dehydrogenase (311 aa).

NAD(+) contacts are provided by residues 7–13 (GAAGGIG) and Asp-34. Substrate contacts are provided by Arg-81 and Arg-87. NAD(+) is bound by residues Asn-94 and 117–119 (ITN). Substrate-binding residues include Asn-119 and Arg-153. His-177 serves as the catalytic Proton acceptor. Met-227 contacts NAD(+).

The protein belongs to the LDH/MDH superfamily. MDH type 1 family. Homodimer.

It carries out the reaction (S)-malate + NAD(+) = oxaloacetate + NADH + H(+). Catalyzes the reversible oxidation of malate to oxaloacetate. This is Malate dehydrogenase from Haemophilus influenzae (strain 86-028NP).